Consider the following 129-residue polypeptide: Larval/pupal rigid cuticle protein 66 (129 aa).

An N-terminal signal peptide occupies residues 1–17 (MLVKFVACFVFVAVASA). Residues 18–90 (SDFSSFSYGV…ALIAAAPYIT (73 aa)) form the Chitin-binding type R&amp;R domain.

Expressed in larval wing disc, forewing disc, diapausing wing, adult wing, and in very low amounts in fat body and testes.

Component of the rigid cuticle of the larva and pupa of Hyalophora cecropia. The polypeptide is Larval/pupal rigid cuticle protein 66 (CP66) (Hyalophora cecropia (Cecropia moth)).